We begin with the raw amino-acid sequence, 348 residues long: Histone PARylation factor 1 (348 aa).

Residues 1-10 show a composition bias toward basic residues; the sequence is MAGRGKRKPR. Positions 1 to 38 are disordered; it reads MAGRGKRKPRSLPQTETPNGEVKKAKEGLKDDKTSVGE. The segment covering 21–38 has biased composition (basic and acidic residues); that stretch reads EVKKAKEGLKDDKTSVGE. The stretch at 170–200 forms a coiled coil; it reads LQKKKKEKRQQKDDAALNRLEEDLKREAERL. The Proton donor role is filled by Glu-285.

It belongs to the HPF1 family. In terms of assembly, interacts with PARP1 (via the PARP catalytic domain). Interacts with PARP2 (via the PARP catalytic domain). Interacts with core nucleosomes in a parp1- and parp2-dependent manner. In adult, mainly expressed in gonads.

The protein resides in the chromosome. It is found in the nucleus. Cofactor for serine ADP-ribosylation that confers serine specificity on parp1 and parp2 and plays a key role in DNA damage response. Initiates the repair of double-strand DNA breaks: recruited to DNA damage sites by parp1 and parp2 and switches the amino acid specificity of parp1 and parp2 from aspartate or glutamate to serine residues, licensing serine ADP-ribosylation of target proteins. Serine ADP-ribosylation of target proteins, such as histones, promotes decompaction of chromatin and the recruitment of repair factors leading to the reparation of DNA strand breaks. Serine ADP-ribosylation of proteins constitutes the primary form of ADP-ribosylation of proteins in response to DNA damage. Hpf1 acts by completing the active site of parp1 and parp2: forms a composite active site composed of residues from Hpf1 and parp1 or parp2. While hpf1 promotes the initiation of serine ADP-ribosylation, it restricts the polymerase activity of parp1 and parp2 in order to limit the length of poly-ADP-ribose chains. Hpf1 also promotes tyrosine ADP-ribosylation, probably by conferring tyrosine specificity on parp1. The polypeptide is Histone PARylation factor 1 (Danio rerio (Zebrafish)).